The chain runs to 306 residues: Elongation factor Ts (306 aa).

Residues 80–83 (TDFV) are involved in Mg(2+) ion dislocation from EF-Tu.

The protein belongs to the EF-Ts family.

It localises to the cytoplasm. Associates with the EF-Tu.GDP complex and induces the exchange of GDP to GTP. It remains bound to the aminoacyl-tRNA.EF-Tu.GTP complex up to the GTP hydrolysis stage on the ribosome. The polypeptide is Elongation factor Ts (Clostridium acetobutylicum (strain ATCC 824 / DSM 792 / JCM 1419 / IAM 19013 / LMG 5710 / NBRC 13948 / NRRL B-527 / VKM B-1787 / 2291 / W)).